The primary structure comprises 887 residues: MDNPSSPPPNTPSDAAERRDLRAAMTSPVGDFEPFENEDEILGDQTVRDEAEEEDGEELFGDNMENDYRPMPELDHYDPALLDDEDDFSEMSQGDRFAAESEMRRRDRAAGIHRDDRDLGFGQSDDEDDVGPRAKRRAGEKAAVGEVEDTEMVESIENLEDTKGHSTKEWVSMLGPRTEIANRFQSFLRTFVDERGAYTYRDRIRRMCEQNMSSFVVSYTDLANKEHVLAYFLPEAPFQMLEIFDKVAKDMVLSIFPTYERVTTEIHVRISELPLIEELRTFRKLHLNQLVRTLGVVTATTGVLPQLSVIKYDCVKCGYVLGPFVQSQNTEIKPGSCPECQSTGPFSINMEQTLYRNYQKITLQESPGRIPAGRIPRSKDVILLADLCDQCKPGDELEVTGIYTNNYDGSLNTDQGFPVFATVIIANHVVVKDSKQVVQSLTDEDIATIQKLSKDPRIVERVVASMAPSIYGHDYIKRALALALFGGESKNPGEKHKVRGDINLLICGDPGTAKSQFLKYTEKVAPRAVFTTGQGASAVGLTAYVRRNPVSREWTLEAGALVLADQGVCLIDEFDKMNDQDRTSIHEAMEQQSISISKAGIVTSLQARCTVIAAANPIGGRYDPSMTFSENVNLSEPILSRFDVLCVVKDEFDPMQDQQLAKFVVHSHMKHHPSEEEQPELEEPQLKTVDEIPQDLLRQYIVYAKENIRPKLTNIDEDKIAKMYAQLRQESFATGSLPITVRHIESVIRMSEAHARMHLRENVMEADVSMAIRMMLESFIEAQKFSVMKKMRSTFQKYLSFQKDHSELLFFILRQLTLDQLAYIRCKDGPGATHVEIMERDLIERAKQLDIVNLKPFYESDLFRTNGFSYDPKRRIILQIVVDGNTA.

Residues 1–11 (MDNPSSPPPNT) show a composition bias toward pro residues. A disordered region spans residues 1-150 (MDNPSSPPPN…KAAVGEVEDT (150 aa)). Threonine 26 carries the phosphothreonine modification. Serine 27 carries the post-translational modification Phosphoserine. Composition is skewed to acidic residues over residues 33–42 (EPFENEDEIL) and 50–60 (EAEEEDGEELF). Positions 66–78 (NDYRPMPELDHYD) are enriched in basic and acidic residues. 2 positions are modified to phosphoserine: serine 89 and serine 92. The segment covering 97 to 119 (FAAESEMRRRDRAAGIHRDDRDL) has biased composition (basic and acidic residues). A Phosphoserine modification is found at serine 124. A C4-type zinc finger spans residues 314-340 (CVKCGYVLGPFVQSQNTEIKPGSCPEC). The MCM domain maps to 458–665 (IVERVVASMA…QDQQLAKFVV (208 aa)). ADP contacts are provided by serine 515 and glutamine 516. Positions 640–643 (SRFD) match the Arginine finger motif.

Belongs to the MCM family. Component of the Mcm2-7 complex. The complex forms a toroidal hexameric ring with the proposed subunit order Mcm2-Mcm6-Mcm4-Mcm7-Mcm3-Mcm5. Interacts with Mcm10. Phosphorylated by the catalytic component of the Dbf4-dependent kinase (DDK) complex Cdc7.

Its subcellular location is the nucleus. It is found in the chromosome. The enzyme catalyses ATP + H2O = ADP + phosphate + H(+). In terms of biological role, acts as a component of the MCM2-7 complex (MCM complex) which is the replicative helicase essential for 'once per cell cycle' DNA replication initiation and elongation in eukaryotic cells. Core component of CDC45-MCM-GINS (CMG) helicase, the molecular machine that unwinds template DNA during replication, and around which the replisome is built. The active ATPase sites in the MCM2-7 ring are formed through the interaction surfaces of two neighboring subunits such that a critical structure of a conserved arginine finger motif is provided in trans relative to the ATP-binding site of the Walker A box of the adjacent subunit. The six ATPase active sites, however, are likely to contribute differentially to the complex helicase activity. Required for the entry in S phase and for cell division. This chain is DNA replication licensing factor Mcm2 (Mcm2), found in Drosophila melanogaster (Fruit fly).